We begin with the raw amino-acid sequence, 262 residues long: Phycoerythrobilin:ferredoxin oxidoreductase (262 aa).

This sequence belongs to the HY2 family.

The enzyme catalyses (3Z)-phycoerythrobilin + oxidized 2[4Fe-4S]-[ferredoxin] = 15,16-dihydrobiliverdin + reduced 2[4Fe-4S]-[ferredoxin] + 2 H(+). Catalyzes the two-electron reduction of the C2 and C3(1) diene system of 15,16-dihydrobiliverdin. This Parasynechococcus marenigrum (strain WH8102) protein is Phycoerythrobilin:ferredoxin oxidoreductase (pebB).